Reading from the N-terminus, the 57-residue chain is Large ribosomal subunit protein bL32B (57 aa).

Belongs to the bacterial ribosomal protein bL32 family.

This Listeria welshimeri serovar 6b (strain ATCC 35897 / DSM 20650 / CCUG 15529 / CIP 8149 / NCTC 11857 / SLCC 5334 / V8) protein is Large ribosomal subunit protein bL32B.